Reading from the N-terminus, the 480-residue chain is Protein nucleotidyltransferase YdiU (480 aa).

Residues Gly-86, Gly-88, Arg-89, Lys-109, Asp-121, Gly-122, Arg-172, and Arg-179 each contribute to the ATP site. The Proton acceptor role is filled by Asp-248. The Mg(2+) site is built by Asn-249 and Asp-258. Asp-258 serves as a coordination point for ATP.

The protein belongs to the SELO family. Mg(2+) serves as cofactor. It depends on Mn(2+) as a cofactor.

The catalysed reaction is L-seryl-[protein] + ATP = 3-O-(5'-adenylyl)-L-seryl-[protein] + diphosphate. The enzyme catalyses L-threonyl-[protein] + ATP = 3-O-(5'-adenylyl)-L-threonyl-[protein] + diphosphate. It carries out the reaction L-tyrosyl-[protein] + ATP = O-(5'-adenylyl)-L-tyrosyl-[protein] + diphosphate. It catalyses the reaction L-histidyl-[protein] + UTP = N(tele)-(5'-uridylyl)-L-histidyl-[protein] + diphosphate. The catalysed reaction is L-seryl-[protein] + UTP = O-(5'-uridylyl)-L-seryl-[protein] + diphosphate. The enzyme catalyses L-tyrosyl-[protein] + UTP = O-(5'-uridylyl)-L-tyrosyl-[protein] + diphosphate. In terms of biological role, nucleotidyltransferase involved in the post-translational modification of proteins. It can catalyze the addition of adenosine monophosphate (AMP) or uridine monophosphate (UMP) to a protein, resulting in modifications known as AMPylation and UMPylation. This Salmonella paratyphi C (strain RKS4594) protein is Protein nucleotidyltransferase YdiU.